Consider the following 199-residue polypeptide: MIKLIVGLGNPGAEYTATRHNAGFWLVDQLAREAGATLRDERRFHGFYAKARLHGEEVHLLEPQTYMNRSGQSVVALASFFKILPDQILVAHDELDLPPGTVKLKLGGGSGGHNGLKDISAHLSSQQYWRLRIGIGHPRDLIPEGARAGAKPDVANFVLKPPRREEQDVIDASIERALAVMPMVVKGELDRATMQLHRN.

A tRNA-binding site is contributed by Tyr-15. His-20 functions as the Proton acceptor in the catalytic mechanism. Residues Tyr-66, Asn-68, and Asn-114 each contribute to the tRNA site.

This sequence belongs to the PTH family. Monomer.

It is found in the cytoplasm. The catalysed reaction is an N-acyl-L-alpha-aminoacyl-tRNA + H2O = an N-acyl-L-amino acid + a tRNA + H(+). In terms of biological role, hydrolyzes ribosome-free peptidyl-tRNAs (with 1 or more amino acids incorporated), which drop off the ribosome during protein synthesis, or as a result of ribosome stalling. Catalyzes the release of premature peptidyl moieties from peptidyl-tRNA molecules trapped in stalled 50S ribosomal subunits, and thus maintains levels of free tRNAs and 50S ribosomes. This is Peptidyl-tRNA hydrolase from Burkholderia ambifaria (strain MC40-6).